Consider the following 360-residue polypeptide: DNA polymerase IV (360 aa).

Residues 8–189 enclose the UmuC domain; it reads IIHVDMDCFF…LPLEKIPGVG (182 aa). Mg(2+) is bound by residues Asp12 and Asp107. Glu108 is an active-site residue.

Belongs to the DNA polymerase type-Y family. Monomer. The cofactor is Mg(2+).

The protein localises to the cytoplasm. It carries out the reaction DNA(n) + a 2'-deoxyribonucleoside 5'-triphosphate = DNA(n+1) + diphosphate. Poorly processive, error-prone DNA polymerase involved in untargeted mutagenesis. Copies undamaged DNA at stalled replication forks, which arise in vivo from mismatched or misaligned primer ends. These misaligned primers can be extended by PolIV. Exhibits no 3'-5' exonuclease (proofreading) activity. May be involved in translesional synthesis, in conjunction with the beta clamp from PolIII. The chain is DNA polymerase IV from Vibrio cholerae serotype O1 (strain ATCC 39315 / El Tor Inaba N16961).